A 417-amino-acid polypeptide reads, in one-letter code: Peptidyl-Asp metalloendopeptidase (417 aa).

An N-terminal signal peptide occupies residues 1-25 (MLSRSIGKAAGGLVLGLSVAAAAHA). H327 is a Zn(2+) binding site. Residue E328 is part of the active site. Zn(2+) is bound by residues H331 and H337.

The protein belongs to the peptidase M72 family. It depends on Zn(2+) as a cofactor.

It catalyses the reaction Cleavage of Xaa-|-Asp, Xaa-|-Glu and Xaa-|-cysteic acid bonds.. In terms of biological role, metalloprotease, specifically cleaves on the N-terminal side of aspartyl, glutamyl and cysteic acid residues. In Stenotrophomonas maltophilia (strain R551-3), this protein is Peptidyl-Asp metalloendopeptidase.